Reading from the N-terminus, the 320-residue chain is Arylacetonitrilase (320 aa).

A CN hydrolase domain is found at 5–286; sequence IKASVVQAST…EGVISAELDL (282 aa). Residue E46 is the Proton acceptor of the active site. K133 is a catalytic residue. The Nucleophile role is filled by C178.

The protein belongs to the carbon-nitrogen hydrolase superfamily. Nitrilase family.

It catalyses the reaction a nitrile + 2 H2O = a carboxylate + NH4(+). Functionally, nitrilase that hydrolyzes preferentially fumaronitrile, while 3-phenylpropionitrile, beta-cyano-L-alanine and 4-cyanopyridine are transformed at much lower rates. This chain is Arylacetonitrilase (nit), found in Trametes versicolor (strain FP-101664) (White-rot fungus).